A 218-amino-acid chain; its full sequence is Probable nicotinate-nucleotide adenylyltransferase (218 aa).

Belongs to the NadD family.

The catalysed reaction is nicotinate beta-D-ribonucleotide + ATP + H(+) = deamido-NAD(+) + diphosphate. It functions in the pathway cofactor biosynthesis; NAD(+) biosynthesis; deamido-NAD(+) from nicotinate D-ribonucleotide: step 1/1. Its function is as follows. Catalyzes the reversible adenylation of nicotinate mononucleotide (NaMN) to nicotinic acid adenine dinucleotide (NaAD). This is Probable nicotinate-nucleotide adenylyltransferase from Sodalis glossinidius (strain morsitans).